The sequence spans 211 residues: Leucyl/phenylalanyl-tRNA--protein transferase (211 aa).

It belongs to the L/F-transferase family.

It localises to the cytoplasm. The catalysed reaction is N-terminal L-lysyl-[protein] + L-leucyl-tRNA(Leu) = N-terminal L-leucyl-L-lysyl-[protein] + tRNA(Leu) + H(+). It catalyses the reaction N-terminal L-arginyl-[protein] + L-leucyl-tRNA(Leu) = N-terminal L-leucyl-L-arginyl-[protein] + tRNA(Leu) + H(+). It carries out the reaction L-phenylalanyl-tRNA(Phe) + an N-terminal L-alpha-aminoacyl-[protein] = an N-terminal L-phenylalanyl-L-alpha-aminoacyl-[protein] + tRNA(Phe). In terms of biological role, functions in the N-end rule pathway of protein degradation where it conjugates Leu, Phe and, less efficiently, Met from aminoacyl-tRNAs to the N-termini of proteins containing an N-terminal arginine or lysine. This is Leucyl/phenylalanyl-tRNA--protein transferase from Flavobacterium psychrophilum (strain ATCC 49511 / DSM 21280 / CIP 103535 / JIP02/86).